A 117-amino-acid polypeptide reads, in one-letter code: Putative phosphotransferase enzyme IIB component MPN_268 (117 aa).

A helical transmembrane segment spans residues 1-21; the sequence is MKVLLWIGYVLSFGLLYLYLV. Positions 42–117 constitute a PTS EIIB type-1 domain; sequence PFAVRDFIAA…QLKQQIENER (76 aa).

The protein resides in the membrane. Functionally, the phosphoenolpyruvate-dependent sugar phosphotransferase system (PTS), a major carbohydrate active -transport system, catalyzes the phosphorylation of incoming sugar substrates concomitant with their translocation across the cell membrane. This is Putative phosphotransferase enzyme IIB component MPN_268 from Mycoplasma pneumoniae (strain ATCC 29342 / M129 / Subtype 1) (Mycoplasmoides pneumoniae).